Reading from the N-terminus, the 1024-residue chain is Beta-galactosidase (1024 aa).

The substrate site is built by N103 and D202. D202 serves as a coordination point for Na(+). Residues E417, H419, and E462 each contribute to the Mg(2+) site. Residues E462 and 538-541 (EYAH) contribute to the substrate site. E462 acts as the Proton donor in catalysis. Residue E538 is the Nucleophile of the active site. Residue N598 coordinates Mg(2+). Na(+) contacts are provided by F602 and N605. 2 residues coordinate substrate: N605 and W1000.

This sequence belongs to the glycosyl hydrolase 2 family. In terms of assembly, homotetramer. It depends on Mg(2+) as a cofactor. Requires Na(+) as cofactor.

It catalyses the reaction Hydrolysis of terminal non-reducing beta-D-galactose residues in beta-D-galactosides.. The chain is Beta-galactosidase from Shigella dysenteriae serotype 1 (strain Sd197).